A 355-amino-acid polypeptide reads, in one-letter code: DNA polymerase IV (355 aa).

In terms of domain architecture, UmuC spans 7–188; it reads IIHIDMDCFY…LPVRKLFGVG (182 aa). 2 residues coordinate Mg(2+): Asp11 and Asp106. Glu107 is a catalytic residue.

The protein belongs to the DNA polymerase type-Y family. As to quaternary structure, monomer. It depends on Mg(2+) as a cofactor.

The protein localises to the cytoplasm. The enzyme catalyses DNA(n) + a 2'-deoxyribonucleoside 5'-triphosphate = DNA(n+1) + diphosphate. Poorly processive, error-prone DNA polymerase involved in untargeted mutagenesis. Copies undamaged DNA at stalled replication forks, which arise in vivo from mismatched or misaligned primer ends. These misaligned primers can be extended by PolIV. Exhibits no 3'-5' exonuclease (proofreading) activity. May be involved in translesional synthesis, in conjunction with the beta clamp from PolIII. The chain is DNA polymerase IV from Legionella pneumophila (strain Corby).